The following is a 148-amino-acid chain: UPF0178 protein SH2212 (148 aa).

It belongs to the UPF0178 family.

This Staphylococcus haemolyticus (strain JCSC1435) protein is UPF0178 protein SH2212.